The primary structure comprises 223 residues: Small ribosomal subunit protein uS5 (223 aa).

Residues 1–66 form a disordered region; sequence MPPQQQRGRG…AERAQAETEF (66 aa). The span at 13–22 shows a compositional bias: gly residues; sequence RGPGGPGGPG. Basic and acidic residues predominate over residues 53-66; that stretch reads GGDKAERAQAETEF. The S5 DRBM domain occupies 66–129; it reads FQERVVQIRR…SDARKALIRV (64 aa).

It belongs to the universal ribosomal protein uS5 family. As to quaternary structure, part of the 30S ribosomal subunit. Contacts proteins S4 and S8.

Functionally, with S4 and S12 plays an important role in translational accuracy. Located at the back of the 30S subunit body where it stabilizes the conformation of the head with respect to the body. The protein is Small ribosomal subunit protein uS5 of Gloeobacter violaceus (strain ATCC 29082 / PCC 7421).